Reading from the N-terminus, the 179-residue chain is Large ribosomal subunit protein uL6 (179 aa).

Belongs to the universal ribosomal protein uL6 family. Part of the 50S ribosomal subunit.

Functionally, this protein binds to the 23S rRNA, and is important in its secondary structure. It is located near the subunit interface in the base of the L7/L12 stalk, and near the tRNA binding site of the peptidyltransferase center. In Prochlorococcus marinus (strain SARG / CCMP1375 / SS120), this protein is Large ribosomal subunit protein uL6.